Reading from the N-terminus, the 441-residue chain is Arginine biosynthesis bifunctional protein ArgJ, mitochondrial (441 aa).

The substrate site is built by threonine 177, lysine 204, threonine 215, glutamate 301, asparagine 436, and serine 441. Threonine 215 acts as the Nucleophile in catalysis.

It belongs to the ArgJ family. In terms of assembly, heterodimer of an alpha and a beta chain. Post-translationally, the alpha and beta chains are autoproteolytically processed from a single precursor protein within the mitochondrion.

The protein resides in the mitochondrion matrix. The enzyme catalyses N(2)-acetyl-L-ornithine + L-glutamate = N-acetyl-L-glutamate + L-ornithine. It catalyses the reaction L-glutamate + acetyl-CoA = N-acetyl-L-glutamate + CoA + H(+). Its pathway is amino-acid biosynthesis; L-arginine biosynthesis; L-ornithine and N-acetyl-L-glutamate from L-glutamate and N(2)-acetyl-L-ornithine (cyclic): step 1/1. The protein operates within amino-acid biosynthesis; L-arginine biosynthesis; N(2)-acetyl-L-ornithine from L-glutamate: step 1/4. In terms of biological role, catalyzes two activities which are involved in the cyclic version of arginine biosynthesis: the synthesis of acetylglutamate from glutamate and acetyl-CoA, and of ornithine by transacetylation between acetylornithine and glutamate. This chain is Arginine biosynthesis bifunctional protein ArgJ, mitochondrial, found in Candida glabrata (strain ATCC 2001 / BCRC 20586 / JCM 3761 / NBRC 0622 / NRRL Y-65 / CBS 138) (Yeast).